The primary structure comprises 640 residues: Threonine--tRNA ligase (640 aa).

One can recognise a TGS domain in the interval 1–61 (MPTITLPDGS…ACDADVTIIT (61 aa)). The tract at residues 243–534 (DHRKIGKALD…LIEQYAGNMP (292 aa)) is catalytic. Positions 334, 385, and 511 each coordinate Zn(2+).

It belongs to the class-II aminoacyl-tRNA synthetase family. As to quaternary structure, homodimer. Zn(2+) is required as a cofactor.

The protein resides in the cytoplasm. It catalyses the reaction tRNA(Thr) + L-threonine + ATP = L-threonyl-tRNA(Thr) + AMP + diphosphate + H(+). In terms of biological role, catalyzes the attachment of threonine to tRNA(Thr) in a two-step reaction: L-threonine is first activated by ATP to form Thr-AMP and then transferred to the acceptor end of tRNA(Thr). Also edits incorrectly charged L-seryl-tRNA(Thr). The chain is Threonine--tRNA ligase from Dichelobacter nodosus (strain VCS1703A).